The sequence spans 188 residues: Large ribosomal subunit protein eL18 (188 aa).

A Glycyl lysine isopeptide (Lys-Gly) (interchain with G-Cter in SUMO2) cross-link involves residue Lys-119. Ser-130 is modified (phosphoserine). Residues 150–188 (RHFGKAPGTPHSHTKPYVRSKGRKFERARGRRASRGYKN) form a disordered region. At Thr-158 the chain carries Phosphothreonine. 2 stretches are compositionally biased toward basic residues: residues 161–171 (SHTKPYVRSKG) and 178–188 (RGRRASRGYKN). Lys-164 participates in a covalent cross-link: Glycyl lysine isopeptide (Lys-Gly) (interchain with G-Cter in SUMO2).

This sequence belongs to the eukaryotic ribosomal protein eL18 family. As to quaternary structure, component of the large ribosomal subunit.

The protein localises to the cytoplasm. It localises to the cytosol. Its subcellular location is the rough endoplasmic reticulum. Its function is as follows. Component of the large ribosomal subunit. The ribosome is a large ribonucleoprotein complex responsible for the synthesis of proteins in the cell. This chain is Large ribosomal subunit protein eL18 (Rpl18), found in Rattus norvegicus (Rat).